The following is a 602-amino-acid chain: MNHFPKLLSSQIGFDVAETLLAGFDRHYCIFREAAIRAKNLFEAADWHGLQKLARERITSYDERVRECIAKLEDEYDAENIDDDVWQQIKLHYIGLLTTHRQPECAETFFNSVCCHILHRSYFNNDFIFVRPAISTEYIENDEPAAKPTYRAYYPGKDGLAVTLERIVTNFQLNPPFENLTRDVQCVIQALRDNFGTFNEAPNFQIHVLSSLFFRNKAAYIIGRIINGDMMLPFALPVHHVKPGLLALDALLCKRDQLLIIFSFAHSYFLVDMEVPSAYVEFLGSILHGKPKAEIYTSVGLQKQGKNLFYRDLLRHLKHSSDRFIIAPGIKGMVMLVFTLPSFPYVFKLIKDAFPPPKETTREQVVGKYQLVKRHDRLGRMADTLEYSSVALPLSRLDDALIRELEKEAPSMLEYEGDNLVIRHVYIERRMVPLNIFLQNGTDADIEHGIREYGNAVKELMQANIFPGDMLYKNFGVTRHGRVVFYDYDEIEYLTDCNVRAVPPPRNEEDEMSGEPWYSVGPHDIFPETYNTFLLGDPRVRESFLKHHADFFDPALWQKQKDYILRGELPDFYPYDRSLRFSIRYPERFAADHVTAATERAA.

ATP is bound by residues 327–333 and lysine 348; that span reads APGIKGM. Aspartate 383 is a catalytic residue.

It belongs to the AceK family.

The protein resides in the cytoplasm. It catalyses the reaction L-seryl-[isocitrate dehydrogenase] + ATP = O-phospho-L-seryl-[isocitrate dehydrogenase] + ADP + H(+). Functionally, bifunctional enzyme which can phosphorylate or dephosphorylate isocitrate dehydrogenase (IDH) on a specific serine residue. This is a regulatory mechanism which enables bacteria to bypass the Krebs cycle via the glyoxylate shunt in response to the source of carbon. When bacteria are grown on glucose, IDH is fully active and unphosphorylated, but when grown on acetate or ethanol, the activity of IDH declines drastically concomitant with its phosphorylation. This chain is Isocitrate dehydrogenase kinase/phosphatase, found in Paraburkholderia phymatum (strain DSM 17167 / CIP 108236 / LMG 21445 / STM815) (Burkholderia phymatum).